A 561-amino-acid chain; its full sequence is ATP-dependent rRNA helicase RRP3 (561 aa).

Low complexity-rich tracts occupy residues 1–23 (MPKASASSAKMTASTSNVSSSNS) and 30–45 (ASSPSASPEVSTPSTS). Positions 1–109 (MPKASASSAK…DEKKVATIAD (109 aa)) are disordered. The span at 100–109 (DEKKVATIAD) shows a compositional bias: basic and acidic residues. The Q motif motif lies at 114-142 (VEFSDLGVIPQIVEACTNMGFKHPTPIQV). Positions 145–316 (IPEALQARDV…RASLKNPVRV (172 aa)) constitute a Helicase ATP-binding domain. 158 to 165 (AQTGSGKT) serves as a coordination point for ATP. Positions 264 to 267 (DEAD) match the DEAD box motif. The region spanning 339 to 487 (HKDTYLVHLA…EFPGGNDKEA (149 aa)) is the Helicase C-terminal domain. Positions 506–561 (LKDKGVGSAGGSGKRKRKMDGKYGDDMDRDDDQVQAGLPVSGNGRHQNQNRKKGRR) are disordered.

Belongs to the DEAD box helicase family. DDX47/RRP3 subfamily. Interacts with the SSU processome.

It localises to the nucleus. The enzyme catalyses ATP + H2O = ADP + phosphate + H(+). Its function is as follows. ATP-dependent rRNA helicase required for pre-ribosomal RNA processing. Involved in the maturation of the 35S-pre-rRNA and to its cleavage to mature 18S rRNA. This Mycosarcoma maydis (Corn smut fungus) protein is ATP-dependent rRNA helicase RRP3.